Reading from the N-terminus, the 289-residue chain is ATP synthase gamma chain (289 aa).

It belongs to the ATPase gamma chain family. F-type ATPases have 2 components, CF(1) - the catalytic core - and CF(0) - the membrane proton channel. CF(1) has five subunits: alpha(3), beta(3), gamma(1), delta(1), epsilon(1). CF(0) has three main subunits: a, b and c.

The protein resides in the cell inner membrane. In terms of biological role, produces ATP from ADP in the presence of a proton gradient across the membrane. The gamma chain is believed to be important in regulating ATPase activity and the flow of protons through the CF(0) complex. This is ATP synthase gamma chain from Azoarcus sp. (strain BH72).